A 357-amino-acid polypeptide reads, in one-letter code: DNA integrity scanning protein DisA (357 aa).

The 139-residue stretch at 8-146 folds into the DAC domain; it reads VKSMINILQL…GNLRYTLKDI (139 aa). Residues Gly75, Leu93, and 106–110 each bind ATP; that span reads MRHRT.

The protein belongs to the DisA family. In terms of assembly, homooctamer. Requires Mg(2+) as cofactor.

It catalyses the reaction 2 ATP = 3',3'-c-di-AMP + 2 diphosphate. Its function is as follows. Participates in a DNA-damage check-point that is active prior to asymmetric division when DNA is damaged. DisA forms globular foci that rapidly scan along the chromosomes during sporulation, searching for lesions. When a lesion is present, DisA pauses at the lesion site. This triggers a cellular response that culminates in a temporary block in sporulation initiation. Also has diadenylate cyclase activity, catalyzing the condensation of 2 ATP molecules into cyclic di-AMP (c-di-AMP). c-di-AMP acts as a signaling molecule that couples DNA integrity with progression of sporulation. The rise in c-di-AMP level generated by DisA while scanning the chromosome, operates as a positive signal that advances sporulation; upon encountering a lesion, the DisA focus arrests at the damaged site and halts c-di-AMP synthesis. The chain is DNA integrity scanning protein DisA from Bacillus cereus (strain G9842).